The primary structure comprises 546 residues: Chaperonin GroEL (546 aa).

Residues 30 to 33, K51, 87 to 91, G415, 479 to 481, and D495 each bind ATP; these read TLGP, DGTTT, and NAA.

This sequence belongs to the chaperonin (HSP60) family. In terms of assembly, forms a cylinder of 14 subunits composed of two heptameric rings stacked back-to-back. Interacts with the co-chaperonin GroES.

The protein resides in the cytoplasm. The enzyme catalyses ATP + H2O + a folded polypeptide = ADP + phosphate + an unfolded polypeptide.. Together with its co-chaperonin GroES, plays an essential role in assisting protein folding. The GroEL-GroES system forms a nano-cage that allows encapsulation of the non-native substrate proteins and provides a physical environment optimized to promote and accelerate protein folding. The chain is Chaperonin GroEL from Pseudomonas entomophila (strain L48).